Reading from the N-terminus, the 177-residue chain is Endoribonuclease YbeY (177 aa).

Residues His114, His118, and His124 each coordinate Zn(2+). A disordered region spans residues 154–177; that stretch reads SYPEAIPTNPAPRRQASSSAGHIE. Over residues 168–177 the composition is skewed to polar residues; it reads QASSSAGHIE.

It belongs to the endoribonuclease YbeY family. The cofactor is Zn(2+).

It is found in the cytoplasm. Single strand-specific metallo-endoribonuclease involved in late-stage 70S ribosome quality control and in maturation of the 3' terminus of the 16S rRNA. The polypeptide is Endoribonuclease YbeY (Cellvibrio japonicus (strain Ueda107) (Pseudomonas fluorescens subsp. cellulosa)).